Consider the following 426-residue polypeptide: Protein prenyltransferase alpha subunit repeat-containing protein 1 (426 aa).

PFTA repeat units follow at residues 86 to 119 (ALVD…VLNP), 121 to 154 (KDLY…QKEC), 180 to 213 (EEMR…AKGN), and 219 to 252 (DELS…AKEL). Residues 255 to 279 (AAEKDVHTSQQPNGENTATASDDNH) form a disordered region. A compositionally biased stretch (polar residues) spans 262-275 (TSQQPNGENTATAS). The PFTA 5 repeat unit spans residues 290 to 323 (EEIQLCTDLIESYPGHETLWCHRRHVFYLWHQWR).

This sequence belongs to the protein prenyltransferase subunit alpha family.

This is Protein prenyltransferase alpha subunit repeat-containing protein 1 (ptar1) from Danio rerio (Zebrafish).